The chain runs to 215 residues: Cytochrome b6 (215 aa).

The chain crosses the membrane as a helical span at residues 32–52; sequence IFYCIGGITFTCFLVQVATGF. Cys-35 contributes to the heme c binding site. Heme b is bound by residues His-86 and His-100. 3 helical membrane passes run 90–110, 116–136, and 186–206; these read ASMMVLMMILHVCRVYLTGGF, LTWVTGVIMAVCTVSFGVTGY, and LHTFVLPLATAVFMLMHFLMI. Heme b is bound by residues His-187 and His-202.

It belongs to the cytochrome b family. PetB subfamily. As to quaternary structure, the 4 large subunits of the cytochrome b6-f complex are cytochrome b6, subunit IV (17 kDa polypeptide, PetD), cytochrome f and the Rieske protein, while the 4 small subunits are PetG, PetL, PetM and PetN. The complex functions as a dimer. The cofactor is heme b. Requires heme c as cofactor.

The protein localises to the plastid. It is found in the chloroplast thylakoid membrane. In terms of biological role, component of the cytochrome b6-f complex, which mediates electron transfer between photosystem II (PSII) and photosystem I (PSI), cyclic electron flow around PSI, and state transitions. The polypeptide is Cytochrome b6 (Chlorella vulgaris (Green alga)).